We begin with the raw amino-acid sequence, 143 residues long: Small ribosomal subunit protein uS12 (143 aa).

Over residues 1–20 the composition is skewed to basic residues; that stretch reads MGKPRGLRTARKLKNHRREQ. Residues 1–28 are disordered; that stretch reads MGKPRGLRTARKLKNHRREQRWHDKDYK. At proline 62 the chain carries Hydroxyproline.

The protein belongs to the universal ribosomal protein uS12 family. In terms of assembly, component of the 40S small ribosomal subunit.

The protein localises to the cytoplasm. The protein resides in the cytosol. It is found in the rough endoplasmic reticulum. In Lumbricus rubellus (Humus earthworm), this protein is Small ribosomal subunit protein uS12 (RPS23).